The following is a 200-amino-acid chain: MFSEVEMARDVAICAKHLNGQSPHQPILCRLLQDLIHEKACREHGFYLGITALKSIGNNKNNNIDNENNHQAKILTFPVSFTCRTFLPARGDILQGTVKKVLWNGAFIRSGPLRYAYLSLLKMPHYHYVHSPLSEDEKPHFQKDDLSKIAVGVVVRFQVLAVRFKERPHKRRNDYYVLATLEGNGSFGPISLTGSDEPYM.

This sequence belongs to the eukaryotic RPB7/RPC8 RNA polymerase subunit family.

It is found in the nucleus. The sequence is that of DNA-directed RNA polymerase subunit 7-like protein (NRPB7L) from Arabidopsis thaliana (Mouse-ear cress).